The following is a 318-amino-acid chain: Ubiquinone biosynthesis protein COQ9, mitochondrial (318 aa).

Residues 1-44 (MAAAAVSGALGRAGWRLLQLRCLPVARCRQALVPRAFHASAVGL) constitute a mitochondrion transit peptide. The short motif at 16 to 31 (RLLQLRCLPVARCRQA) is the SIFI-degron element. The interval 44–98 (LRSSDEQKQQPPNSFSQQHSETQGAEKPDPESSHSPPRYTDQGGEEEEDYESEEQ) is disordered. The span at 52 to 66 (QQPPNSFSQQHSETQ) shows a compositional bias: polar residues. The span at 86–97 (GGEEEEDYESEE) shows a compositional bias: acidic residues. Residue Lys-175 is modified to N6-acetyllysine. Residue Arg-244 coordinates a 1,2-diacylglycero-3-phosphoethanolamine.

It belongs to the COQ9 family. Homodimer. Heterodimer; two heterodimers of COQ7:COQ9 come together on the same side of the lipid pseudo-bilayer and form a curved tetramer with a hydrophobic surface suitable for membrane interaction. These two tetramers assemble into a soluble octamer with a pseudo-bilayer of lipids captured within. Interacts with COQ7; this interaction allows ubiquinone (CoQ) isoprene intermediates presentation to COQ7 and facilitates the COQ7-mediated hydroxylase step. In terms of processing, in response to mitochondrial stress, the precursor protein is ubiquitinated by the SIFI complex in the cytoplasm before mitochondrial import, leading to its degradation. Within the SIFI complex, UBR4 initiates ubiquitin chain that are further elongated or branched by KCMF1.

Its subcellular location is the mitochondrion. It participates in cofactor biosynthesis; ubiquinone biosynthesis. Its function is as follows. Membrane-associated protein that warps the membrane surface to access and bind aromatic isoprenes with high specificity, including ubiquinone (CoQ) isoprene intermediates and presents them directly to COQ7, therefore facilitating the COQ7-mediated hydroxylase step. Participates in the biosynthesis of coenzyme Q, also named ubiquinone, an essential lipid-soluble electron transporter for aerobic cellular respiration. This Homo sapiens (Human) protein is Ubiquinone biosynthesis protein COQ9, mitochondrial.